The chain runs to 579 residues: Glypican-3 (579 aa).

The N-terminal stretch at 1-24 is a signal peptide; the sequence is MAGTVRTACLLVAMLLGLGCLGQA. The residue at position 25 (Gln25) is a Pyrrolidone carboxylic acid. 7 cysteine pairs are disulfide-bonded: Cys34/Cys71, Cys64/Cys261, Cys72/Cys264, Cys196/Cys348, Cys251/Cys284, Cys273/Cys421, and Cys277/Cys409. Residues Asn123 and Asn240 are each glycosylated (N-linked (GlcNAc...) asparagine). Ser351 is subject to Phosphoserine. The N-linked (GlcNAc...) asparagine glycan is linked to Asn417. O-linked (Xyl...) (glycosaminoglycan) serine glycans are attached at residues Ser494 and Ser508. Residues 533 to 552 are disordered; sequence DAPGNKQHGNQKDNEITTSH. Ser553 carries GPI-anchor amidated serine lipidation. Residues 554–579 constitute a propeptide, removed in mature form; it reads VGNMPSPLKILISVAIYVACFFFLVH.

This sequence belongs to the glypican family. Heterodimer; disulfide-linked. Cleavage by a furin-like convertase results in production of alpha and beta chains which form a disulfide-linked heterodimer. Interacts with DPP4. Interacts with FGF2. Interacts with WNT5A. Also interacts with WNT3A and WNT7B. Interacts with hedgehog protein SHH; the heparan sulfate chains are not required for the interaction. Also interacts with hedgehog protein IHH. Interacts with CD81. Interacts with Wnt receptors FZD4, FZD7 and FZD8; the heparan sulfate chains are required for the interaction. In terms of processing, O-glycosylated; contains heparan sulfate and/or chondroitin sulfate. Post-translationally, cleaved intracellularly by a furin-like convertase to generate 2 subunits, alpha and beta, which remain associated through disulfide bonds and are associated with the cell surface via the GPI-anchor. This processing is essential for its role in inhibition of hedgehog signaling. A second proteolytic event may result in cleavage of the protein on the cell surface, separating it from the GPI-anchor and leading to its shedding from the cell surface. As to expression, in the developing limb, absent from the apical epidermal ridge at 11 dpc but highly expressed in the underlying mesenchyme. Expression in the mesenchyme at this stage is asymmetric with highest levels in the regions of the distal mesenchyme within the progress zone and within the proximal anterior and posterior limb bud. At later developmental stages including 12.5 and 13.5 dpc, expression is restricted to the interdigital webs and the regions of chondrocytic differentiation of the developing bones. In the embryonic kidney, expressed in both the ureteric bud and mesenchymal cells as early as 13.5 dpc. Expression at 16.5 dpc is similar to that at 13.5 dpc but decreases by 18.5 dpc.

The protein resides in the cell membrane. Cell surface proteoglycan. Negatively regulates the hedgehog signaling pathway when attached via the GPI-anchor to the cell surface by competing with the hedgehog receptor PTC1 for binding to hedgehog proteins. Binding to the hedgehog protein SHH triggers internalization of the complex by endocytosis and its subsequent lysosomal degradation. Positively regulates the canonical Wnt signaling pathway by binding to the Wnt receptor Frizzled and stimulating the binding of the Frizzled receptor to Wnt ligands. Positively regulates the non-canonical Wnt signaling pathway. Binds to CD81 which decreases the availability of free CD81 for binding to the transcriptional repressor HHEX, resulting in nuclear translocation of HHEX and transcriptional repression. Inhibits the dipeptidyl peptidase activity of DPP4. Plays a role in limb patterning and skeletal development by controlling the cellular response to BMP4. Modulates the effects of growth factors BMP2, BMP7 and FGF7 on renal branching morphogenesis. Required for coronary vascular development. Plays a role in regulating cell movements during gastrulation. The chain is Glypican-3 (Gpc3) from Mus musculus (Mouse).